Reading from the N-terminus, the 77-residue chain is NAD(P)H-quinone oxidoreductase subunit L (77 aa).

2 consecutive transmembrane segments (helical) span residues 12–32 and 47–67; these read LIAY…LLFY and LGIY…SPFL.

This sequence belongs to the complex I NdhL subunit family. In terms of assembly, NDH-1 can be composed of about 15 different subunits; different subcomplexes with different compositions have been identified which probably have different functions.

It is found in the cellular thylakoid membrane. It carries out the reaction a plastoquinone + NADH + (n+1) H(+)(in) = a plastoquinol + NAD(+) + n H(+)(out). The catalysed reaction is a plastoquinone + NADPH + (n+1) H(+)(in) = a plastoquinol + NADP(+) + n H(+)(out). Its function is as follows. NDH-1 shuttles electrons from an unknown electron donor, via FMN and iron-sulfur (Fe-S) centers, to quinones in the respiratory and/or the photosynthetic chain. The immediate electron acceptor for the enzyme in this species is believed to be plastoquinone. Couples the redox reaction to proton translocation, and thus conserves the redox energy in a proton gradient. Cyanobacterial NDH-1 also plays a role in inorganic carbon-concentration. This chain is NAD(P)H-quinone oxidoreductase subunit L, found in Prochlorococcus marinus (strain MIT 9312).